The following is a 664-amino-acid chain: Intraflagellar transport protein 70B (664 aa).

TPR repeat units follow at residues 11-44 (DGEF…SPRS), 45-78 (RAGL…HPEL), 153-186 (YDGQ…SGYQ), 188-220 (DISY…GIRQ), 385-418 (LTEQ…YDET), 423-456 (IPVL…CNDH), and 458-491 (VWKL…NYDN). Positions 507-534 (YIMTSQNEEAEELMRKIEKEEEQLSYDD) form a coiled coil. The TPR 8 repeat unit spans residues 543 to 576 (CIVNLVIGTLYCAKGNYDFGISRVIKSLEPYHKK).

The protein belongs to the TTC30/dfy-1/fleer family. In terms of assembly, interacts with the IFT B complex components IFT27, IFT46, IFT74, IFT52, IFT57, IFT80, IFT81 and IFT88. Interacts with KIF17.

The protein localises to the cell projection. Its subcellular location is the cilium. Its function is as follows. Required for polyglutamylation of axonemal tubulin. Plays a role in anterograde intraflagellar transport (IFT), the process by which cilia precursors are transported from the base of the cilium to the site of their incorporation at the tip. This Rattus norvegicus (Rat) protein is Intraflagellar transport protein 70B (Ift70b).